Consider the following 343-residue polypeptide: Arginine N-succinyltransferase (343 aa).

A succinyl-CoA-binding site is contributed by Leu-125. The active-site Proton donor is His-229.

This sequence belongs to the arginine N-succinyltransferase family.

It catalyses the reaction succinyl-CoA + L-arginine = N(2)-succinyl-L-arginine + CoA + H(+). It participates in amino-acid degradation; L-arginine degradation via AST pathway; L-glutamate and succinate from L-arginine: step 1/5. Catalyzes the transfer of succinyl-CoA to arginine to produce N(2)-succinylarginine. This Photorhabdus laumondii subsp. laumondii (strain DSM 15139 / CIP 105565 / TT01) (Photorhabdus luminescens subsp. laumondii) protein is Arginine N-succinyltransferase.